The following is a 503-amino-acid chain: MMTISLIWGIAVLVSCCIWFIVGIRRRKAGEPPLENGLIPYLGCALKFGSNPLEFLRANQRKHGHVFTCKLMGKYVHFITNSLSYHKVLCHGKYFDWKKFHYTTSAKAFGHRSIDPNDGNTTENINNTFTKTLQGDALCSLSEAMMQNLQSVMRPPGLPKSKSNAWVTEGMYAFCYRVMFEAGYLTLFGRDISKTDTQKALILNNLDNFKQFDQVFPALVAGLPIHLFKTAHKAREKLAEGLKHKNLCVRDQVSELIRLRMFLNDTLSTFDDMEKAKTHLAILWASQANTIPATFWSLFQMIRSPEAMKAASEEVSGALQSAGQELSSGGSAIYLDQVQLNDLPVLDSIIKEALRLSSASLNIRTAKEDFTLHLEDGSYNIRKDDMIALYPQLMHLDPEIYPDPLTFKYDRYLDESGKAKTTFYSNGNKLKCFYMPFGSGATICPGRLFAVQEIKQFLILMLSCFELEFVESQVKCPPLDQSRAGLGILPPLHDIEFKYKLKH.

A helical membrane pass occupies residues 4–24 (ISLIWGIAVLVSCCIWFIVGI). Cysteine 444 provides a ligand contact to heme.

Belongs to the cytochrome P450 family. Heme is required as a cofactor. As to expression, detected in liver (at protein level). Liver.

The protein localises to the endoplasmic reticulum membrane. It localises to the microsome membrane. The enzyme catalyses cholesterol + reduced [NADPH--hemoprotein reductase] + O2 = 7alpha-hydroxycholesterol + oxidized [NADPH--hemoprotein reductase] + H2O + H(+). It catalyses the reaction 4beta-hydroxycholesterol + reduced [NADPH--hemoprotein reductase] + O2 = 4beta,7alpha-dihydroxycholesterol + oxidized [NADPH--hemoprotein reductase] + H2O + H(+). The catalysed reaction is lathosterol + reduced [NADPH--hemoprotein reductase] + O2 = 7alpha,8alpha-epoxy-5alpha-cholestan-3beta-ol + oxidized [NADPH--hemoprotein reductase] + H2O + H(+). It carries out the reaction lathosterol + reduced [NADPH--hemoprotein reductase] + O2 = 5alpha-cholestan-7-oxo-3beta-ol + oxidized [NADPH--hemoprotein reductase] + H2O + H(+). The enzyme catalyses 7-dehydrocholesterol + reduced [NADPH--hemoprotein reductase] + O2 = 7-oxocholesterol + oxidized [NADPH--hemoprotein reductase] + H2O + H(+). It catalyses the reaction (24S)-hydroxycholesterol + reduced [NADPH--hemoprotein reductase] + O2 = (24S)-7alpha-dihydroxycholesterol + oxidized [NADPH--hemoprotein reductase] + H2O + H(+). The catalysed reaction is (24R)-hydroxycholesterol + reduced [NADPH--hemoprotein reductase] + O2 = (24R)-7alpha-dihydroxycholesterol + oxidized [NADPH--hemoprotein reductase] + H2O + H(+). The protein operates within lipid metabolism; bile acid biosynthesis. It functions in the pathway steroid metabolism; cholesterol degradation. Functionally, a cytochrome P450 monooxygenase involved in the metabolism of endogenous cholesterol and its oxygenated derivatives (oxysterols). Mechanistically, uses molecular oxygen inserting one oxygen atom into a substrate, and reducing the second into a water molecule, with two electrons provided by NADPH via cytochrome P450 reductase (CPR; NADPH-ferrihemoprotein reductase). Functions as a critical regulatory enzyme of bile acid biosynthesis and cholesterol homeostasis. Catalyzes the hydroxylation of carbon hydrogen bond at 7-alpha position of cholesterol, a rate-limiting step in cholesterol catabolism and bile acid biosynthesis. 7-alpha hydroxylates several oxysterols, including 4beta-hydroxycholesterol and 24-hydroxycholesterol. Catalyzes the oxidation of the 7,8 double bond of 7-dehydrocholesterol and lathosterol with direct and predominant formation of the 7-keto derivatives. The chain is Cytochrome P450 7A1 (Cyp7a1) from Rattus norvegicus (Rat).